A 469-amino-acid polypeptide reads, in one-letter code: GTPase Der (469 aa).

EngA-type G domains are found at residues 30-193 and 203-376; these read PVLA…PEVA and RRVA…ASWD. Residues 36–43, 83–87, 145–148, 209–216, 256–260, and 321–324 each bind GTP; these read GRPNVGKS, DTGGW, NKVD, GKPNVGKS, DTAGL, and NKWD. The KH-like domain occupies 377–459; it reads TRIPTGPLNS…PIRINVRVRE (83 aa).

This sequence belongs to the TRAFAC class TrmE-Era-EngA-EngB-Septin-like GTPase superfamily. EngA (Der) GTPase family. In terms of assembly, associates with the 50S ribosomal subunit.

In terms of biological role, GTPase that plays an essential role in the late steps of ribosome biogenesis. The protein is GTPase Der of Mycobacterium ulcerans (strain Agy99).